Reading from the N-terminus, the 65-residue chain is Small ribosomal subunit protein eS27 (65 aa).

Zn(2+) contacts are provided by Cys-21, Cys-24, Cys-40, and Cys-43. The segment at 21-43 (CRDCGNVQVVFARPSSTVTCNIC) adopts a C4-type zinc-finger fold.

It belongs to the eukaryotic ribosomal protein eS27 family. As to quaternary structure, part of the 30S ribosomal subunit. Zn(2+) is required as a cofactor.

The sequence is that of Small ribosomal subunit protein eS27 from Thermoplasma acidophilum (strain ATCC 25905 / DSM 1728 / JCM 9062 / NBRC 15155 / AMRC-C165).